Reading from the N-terminus, the 1010-residue chain is 2-oxoglutarate dehydrogenase-like, mitochondrial (1010 aa).

A mitochondrion-targeting transit peptide spans 1-73 (MSQLRLLPSR…RSVHKSWDSF (73 aa)). 3 residues coordinate Ca(2+): His130, Asp143, and Asp145. The thiamine diphosphate site is built by Arg299, Asp398, Asn431, Ile433, and Gln663. Asp398, Asn431, and Ile433 together coordinate Mg(2+).

It belongs to the alpha-ketoglutarate dehydrogenase family. In terms of assembly, the OGDHC complex comprises multiple copies of three catalytic enzyme components, the 2-oxoglutarate dehydrogenase (OGDH/E1), the dihydrolipoamide dehydrogenase (DLST/E2) and the dihydrolipoamide dehydrogenase (DLD/E3). OGDHL/E1-like isoenzyme may replace OGDH in the OGDHC complex in the brain. The presence of either ODGH/E1 or ODGHL/E1-like isoenzyme in the complex may depend on its tissular distribution. The cofactor is thiamine diphosphate. Mg(2+) is required as a cofactor.

It localises to the mitochondrion matrix. The enzyme catalyses N(6)-[(R)-lipoyl]-L-lysyl-[protein] + 2-oxoglutarate + H(+) = N(6)-[(R)-S(8)-succinyldihydrolipoyl]-L-lysyl-[protein] + CO2. Its function is as follows. 2-oxoglutarate dehydrogenase (E1-like) component of the 2-oxoglutarate dehydrogenase multienzyme complex (OGDHC) which mediates the decarboxylation of alpha-ketoglutarate in the tricarboxylic acid cycle. The OGDHC complex catalyzes the overall conversion of 2-oxoglutarate to succinyl-CoA and CO(2) while reducing NAD(+) to NADH. The OGDHC complex is mainly active in the mitochondrion. Involved in the inhibition of cell proliferation and in apoptosis. This Pongo abelii (Sumatran orangutan) protein is 2-oxoglutarate dehydrogenase-like, mitochondrial (OGDHL).